The sequence spans 185 residues: Large ribosomal subunit protein bL25 (185 aa).

The protein belongs to the bacterial ribosomal protein bL25 family. CTC subfamily. As to quaternary structure, part of the 50S ribosomal subunit; part of the 5S rRNA/L5/L18/L25 subcomplex. Contacts the 5S rRNA. Binds to the 5S rRNA independently of L5 and L18.

This is one of the proteins that binds to the 5S RNA in the ribosome where it forms part of the central protuberance. The chain is Large ribosomal subunit protein bL25 from Chlamydia trachomatis serovar D (strain ATCC VR-885 / DSM 19411 / UW-3/Cx).